The chain runs to 178 residues: Large ribosomal subunit protein uL6 (178 aa).

This sequence belongs to the universal ribosomal protein uL6 family. Part of the 50S ribosomal subunit.

Functionally, this protein binds to the 23S rRNA, and is important in its secondary structure. It is located near the subunit interface in the base of the L7/L12 stalk, and near the tRNA binding site of the peptidyltransferase center. This Corynebacterium glutamicum (strain R) protein is Large ribosomal subunit protein uL6.